The sequence spans 557 residues: Potassium-transporting ATPase potassium-binding subunit (557 aa).

10 helical membrane-spanning segments follow: residues 6 to 26, 59 to 79, 127 to 147, 172 to 192, 247 to 267, 278 to 298, 363 to 383, 410 to 430, 475 to 495, and 520 to 540; these read IQLL…GLGL, ALSL…ILFF, AGLT…LLAL, LYVL…FGVV, ISNF…VFLY, WAIF…VWTF, IVFG…LLTV, ILGI…SVSV, VMIA…VLVI, and FYIL…FPVL.

Belongs to the KdpA family. The system is composed of three essential subunits: KdpA, KdpB and KdpC.

The protein resides in the cell inner membrane. Part of the high-affinity ATP-driven potassium transport (or Kdp) system, which catalyzes the hydrolysis of ATP coupled with the electrogenic transport of potassium into the cytoplasm. This subunit binds the periplasmic potassium ions and delivers the ions to the membrane domain of KdpB through an intramembrane tunnel. This chain is Potassium-transporting ATPase potassium-binding subunit, found in Leptospira interrogans serogroup Icterohaemorrhagiae serovar Lai (strain 56601).